Consider the following 217-residue polypeptide: Probable cutinase 3 (217 aa).

Residues 1–17 (MSLRSLFVAGLATLALA) form the signal peptide. 2 disulfide bridges follow: Cys39–Cys118 and Cys65–Cys79. Catalysis depends on Ser129, which acts as the Nucleophile. Cys180 and Cys187 are disulfide-bonded. Asp184 is an active-site residue. Residue His197 is the Proton donor/acceptor of the active site.

This sequence belongs to the cutinase family.

The protein resides in the secreted. It carries out the reaction cutin + H2O = cutin monomers.. In terms of biological role, catalyzes the hydrolysis of complex carboxylic polyesters found in the cell wall of plants. Degrades cutin, a macromolecule that forms the structure of the plant cuticle. The chain is Probable cutinase 3 from Aspergillus fumigatus (strain CBS 144.89 / FGSC A1163 / CEA10) (Neosartorya fumigata).